The sequence spans 309 residues: DSC E3 ubiquitin ligase complex subunit C (309 aa).

The N-linked (GlcNAc...) asparagine glycan is linked to asparagine 61. 2 disordered regions span residues 88 to 110 and 148 to 177; these read LPPS…GKGK and EQAD…FDRL. 2 helical membrane passes run 257-277 and 289-309; these read DDML…AMWL and GLAV…RIMN.

It belongs to the dsc3 family. Component of the DSC E3 ubiquitin ligase complex composed of dscA, dscB, dscC and dscD.

Its subcellular location is the endoplasmic reticulum membrane. It participates in protein modification; protein ubiquitination. Its function is as follows. Component of the DSC E3 ubiquitin ligase complex which is required for the srbA transcriptional activator proteolytic cleavage to release the soluble transcription factor from the membrane in low oxygen or sterol conditions. Required for growth during hypoxia and triazole drug susceptibility, as well as for virulence in a murine model of invasive pulmonary aspergillosis (IPA). The polypeptide is DSC E3 ubiquitin ligase complex subunit C (Aspergillus fumigatus (strain ATCC MYA-4609 / CBS 101355 / FGSC A1100 / Af293) (Neosartorya fumigata)).